An 85-amino-acid polypeptide reads, in one-letter code: Large ribosomal subunit protein bL27 (85 aa).

Positions 1 to 22 are disordered; that stretch reads MAHKKGASSTRNGRDSNAQRLG. The segment covering 7-19 has biased composition (polar residues); the sequence is ASSTRNGRDSNAQ.

Belongs to the bacterial ribosomal protein bL27 family.

In Leifsonia xyli subsp. xyli (strain CTCB07), this protein is Large ribosomal subunit protein bL27.